A 271-amino-acid polypeptide reads, in one-letter code: Tryptophan synthase alpha chain (271 aa).

Catalysis depends on proton acceptor residues Glu49 and Asp60.

The protein belongs to the TrpA family. As to quaternary structure, tetramer of two alpha and two beta chains.

The enzyme catalyses (1S,2R)-1-C-(indol-3-yl)glycerol 3-phosphate + L-serine = D-glyceraldehyde 3-phosphate + L-tryptophan + H2O. It participates in amino-acid biosynthesis; L-tryptophan biosynthesis; L-tryptophan from chorismate: step 5/5. Functionally, the alpha subunit is responsible for the aldol cleavage of indoleglycerol phosphate to indole and glyceraldehyde 3-phosphate. This is Tryptophan synthase alpha chain from Nitrosococcus oceani (strain ATCC 19707 / BCRC 17464 / JCM 30415 / NCIMB 11848 / C-107).